Here is a 519-residue protein sequence, read N- to C-terminus: Membrane-bound glycerophospholipid O-acyltransferase 2 (519 aa).

6 consecutive transmembrane segments (helical) span residues 22–42, 61–81, 88–108, 184–204, 236–256, and 288–305; these read PIDQ…AVWF, TLLG…HFLV, CIMI…FALG, FMGI…FIEG, LLVC…LPVE, and YFAW…GFGF. Residues asparagine 341 and histidine 372 contribute to the active site. The next 3 helical transmembrane spans lie at 365–385, 415–435, and 443–463; these read FFLS…FLTG, IITW…FVLL, and FYRS…LLLP.

It belongs to the membrane-bound acyltransferase family.

It localises to the endoplasmic reticulum membrane. The catalysed reaction is a 1-acyl-sn-glycero-3-phosphocholine + an acyl-CoA = a 1,2-diacyl-sn-glycero-3-phosphocholine + CoA. It carries out the reaction a 1-acyl-sn-glycero-3-phosphoethanolamine + an acyl-CoA = a 1,2-diacyl-sn-glycero-3-phosphoethanolamine + CoA. The enzyme catalyses a 1-acyl-sn-glycero-3-phosphate + an acyl-CoA = a 1,2-diacyl-sn-glycero-3-phosphate + CoA. It catalyses the reaction (9Z)-hexadecenoyl-CoA + 1-hexadecanoyl-sn-glycero-3-phosphocholine = 1-hexadecanoyl-2-(9Z-hexadecenoyl)-sn-glycero-3-phosphocholine + CoA. The catalysed reaction is 1-hexadecanoyl-sn-glycero-3-phosphoethanolamine + (9Z)-octadecenoyl-CoA = 1-hexadecanoyl-2-(9Z-octadecenoyl)-sn-glycero-3-phosphoethanolamine + CoA. It carries out the reaction 1-hexadecanoyl-sn-glycero-3-phosphoethanolamine + (9Z)-hexadecenoyl-CoA = 1-hexadecanoyl-2-(9Z)-hexadecenoyl-sn-glycero-3-phosphoethanolamine + CoA. The enzyme catalyses 1-(9Z-octadecenoyl)-sn-glycero-3-phospho-L-serine + hexadecanoyl-CoA = 1-(9Z)-octadecenoyl-2-hexadecanoyl-sn-glycero-3-phosphoserine + CoA. It catalyses the reaction (9Z,12Z)-octadecadienoyl-CoA + 1-hexadecanoyl-sn-glycero-3-phosphocholine = 1-hexadecanoyl-2-(9Z,12Z-octadecadienoyl)-sn-glycero-3-phosphocholine + CoA. The catalysed reaction is 1-hexadecanoyl-sn-glycero-3-phosphocholine + (9Z)-octadecenoyl-CoA = 1-hexadecanoyl-2-(9Z-octadecenoyl)-sn-glycero-3-phosphocholine + CoA. It carries out the reaction 1-hexadecanoyl-sn-glycero-3-phosphate + (9Z)-hexadecenoyl-CoA = 1-hexadecanoyl-2-[(9Z)-hexadec-9-enoyl]-sn-glycero-3-phosphate + CoA. The enzyme catalyses 1-hexadecanoyl-sn-glycero-3-phosphate + (9Z)-octadecenoyl-CoA = 1-hexadecanoyl-2-(9Z-octadecenoyl)-sn-glycero-3-phosphate + CoA. It catalyses the reaction a 1-O-(1Z-alkenyl)-sn-glycero-3-phosphocholine + (9Z)-octadecenoyl-CoA = 1-O-(1Z)-alkenyl-2-(9Z)-octadecenoyl-sn-glycero-3-phosphocholine + CoA. The catalysed reaction is a 1-O-(1Z-alkenyl)-sn-glycero-3-phosphoethanolamine + (9Z)-octadecenoyl-CoA = 1-O-(1Z)-alkenyl-2-(9Z)-octadecenoyl-sn-glycero-3-phosphoethanolamine + CoA. It carries out the reaction 1-octadecanoyl-sn-glycero-3-phosphoethanolamine + (9Z)-octadecenoyl-CoA = 1-octadecanoyl-2-(9Z-octadecenoyl)-sn-glycero-3-phosphoethanolamine + CoA. The enzyme catalyses 1-octadecanoyl-sn-glycero-3-phosphocholine + (9Z)-octadecenoyl-CoA = 1-octadecanoyl-2-(9Z-octadecenoyl)-sn-glycero-3-phosphocholine + CoA. It catalyses the reaction 1-(9Z-octadecenoyl)-sn-glycero-3-phosphoethanolamine + (9Z)-octadecenoyl-CoA = 1,2-di-(9Z-octadecenoyl)-sn-glycero-3-phosphoethanolamine + CoA. It participates in lipid metabolism; phospholipid metabolism. With respect to regulation, partially inhibited by thimerosal. Its function is as follows. Acyltransferase which catalyzes the transfer of an acyl group from an acyl-CoA to a lysophospholipid leading to the production of a phospholipid and participates in the reacylation step of the phospholipid remodeling pathway also known as the Lands cycle. May catalyze preferentially the acylation of lysophosphatidylethanolamine (1-acyl-sn-glycero-3-phosphoethanolamine or LPE) and lysophosphatidic acid (LPA) and to a lesser extend lysophosphatidylcholine (LPC) and lysophosphatidylserine (LPS). Prefers oleoyl-CoA as the acyl donor. May be involved in chondrocyte differentiation. The chain is Membrane-bound glycerophospholipid O-acyltransferase 2 from Rattus norvegicus (Rat).